Here is a 226-residue protein sequence, read N- to C-terminus: MPLSEHDLAAIRLTLELASLTTVLLLVVGTPIAWWLARTRSRLKGAIGAVVALPLVLPPTVLGFYLLVTMGPHGPIGQLTQFLGLGTLPFTFAGLVVASVFYSLPFVVQPLQNAFEAIGERPLEVASTLRAGPWDTFFTVVVPLARPGFITAAILGFAHTVGEFGVVLMIGGNIPEKTRTVAVQIFDHVEAMEYAQAHWLAGGMVLFSFLVLFALYSSRRFKAGLS.

Residues I11–S217 form the ABC transmembrane type-1 domain. 5 helical membrane-spanning segments follow: residues L17–A37, I47–L67, L88–V108, I150–I170, and A197–S217.

This sequence belongs to the binding-protein-dependent transport system permease family. CysTW subfamily.

Its subcellular location is the cell inner membrane. Part of the binding-protein-dependent transport system for molybdenum; probably responsible for the translocation of the substrate across the membrane. The chain is Molybdenum transport system permease protein ModB (modB) from Azotobacter vinelandii.